Consider the following 157-residue polypeptide: S-ribosylhomocysteine lyase (157 aa).

The Fe cation site is built by H54, H58, and C124.

It belongs to the LuxS family. Homodimer. The cofactor is Fe cation.

The catalysed reaction is S-(5-deoxy-D-ribos-5-yl)-L-homocysteine = (S)-4,5-dihydroxypentane-2,3-dione + L-homocysteine. Its function is as follows. Involved in the synthesis of autoinducer 2 (AI-2) which is secreted by bacteria and is used to communicate both the cell density and the metabolic potential of the environment. The regulation of gene expression in response to changes in cell density is called quorum sensing. Catalyzes the transformation of S-ribosylhomocysteine (RHC) to homocysteine (HC) and 4,5-dihydroxy-2,3-pentadione (DPD). The protein is S-ribosylhomocysteine lyase of Oenococcus oeni (strain ATCC BAA-331 / PSU-1).